We begin with the raw amino-acid sequence, 274 residues long: Protein TIFY 11A (274 aa).

2 disordered regions span residues 49 to 95 and 139 to 176; these read SLAL…SQPG and PIND…QEQN. A Tify domain is found at 92–127; sequence SQPGSSQLTIFFGGKVLVYNEFPVDKAKEIMEVAKQ. The span at 139 to 150 shows a compositional bias: polar residues; the sequence is PINDENNNNKSS. Residues 161–185 are a coiled coil; that stretch reads DNNHLTKEQQQQQEQNQIVERIARR. Residues 182-206 carry the Jas motif; sequence IARRASLHRFFAKRKDRAVARAPYQ. A Nuclear localization signal motif is present at residues 183-190; sequence ARRASLHR. Residues 206–274 are disordered; that stretch reads QVNQNAGHHR…QSSKDLDLRL (69 aa). Positions 249–274 are enriched in basic and acidic residues; the sequence is IKSDGDKDDIMKIEEGQSSKDLDLRL.

This sequence belongs to the TIFY/JAZ family. Homo- and heterodimer. Interacts with MYC2, MYC3, MYC4, AFPH2/NINJA, TIFY10A/JAZ1, TIFY10B/JAZ2, TIFY11B/JAZ6, TIFY5A/JAZ8 and TIFY3B/JAZ12. In terms of assembly, (Microbial infection) Interacts with the pathogenic Pseudomonas syringae HopZ1a protein. Post-translationally, (Microbial infection) Acetylated by Pseudomonas syringae HopZ1a. In terms of processing, ubiquitinated. Targeted for degradation by the SCF(COI1) E3 ubiquitin ligase-proteasome pathway during jasmonate signaling.

The protein resides in the nucleus. Functionally, repressor of jasmonate responses. The chain is Protein TIFY 11A from Arabidopsis thaliana (Mouse-ear cress).